Here is a 418-residue protein sequence, read N- to C-terminus: Glutamyl-tRNA reductase (418 aa).

Substrate-binding positions include 49 to 52 (TCNR), Ser105, 110 to 112 (EPQ), and Gln116. Cys50 serves as the catalytic Nucleophile. 185–190 (GAGEMI) provides a ligand contact to NADP(+).

This sequence belongs to the glutamyl-tRNA reductase family. Homodimer.

It carries out the reaction (S)-4-amino-5-oxopentanoate + tRNA(Glu) + NADP(+) = L-glutamyl-tRNA(Glu) + NADPH + H(+). Its pathway is porphyrin-containing compound metabolism; protoporphyrin-IX biosynthesis; 5-aminolevulinate from L-glutamyl-tRNA(Glu): step 1/2. In terms of biological role, catalyzes the NADPH-dependent reduction of glutamyl-tRNA(Glu) to glutamate 1-semialdehyde (GSA). The polypeptide is Glutamyl-tRNA reductase (Aromatoleum aromaticum (strain DSM 19018 / LMG 30748 / EbN1) (Azoarcus sp. (strain EbN1))).